A 47-amino-acid chain; its full sequence is uncharacterized protein (47 aa).

A disordered region spans residues 19 to 47 (EKVLKNQNPDRLSHMTDKNAQPKSKEKEE).

This is an uncharacterized protein from Bacillus subtilis (strain 168).